Consider the following 487-residue polypeptide: GTPase Der (487 aa).

EngA-type G domains lie at 3-167 (FTLA…EGFA) and 203-378 (LQIA…DIWN). GTP-binding positions include 9 to 16 (GRPNVGKS), 56 to 60 (DTAGL), 119 to 122 (NKAE), 209 to 216 (GRPNAGKS), 256 to 260 (DTAGM), and 321 to 324 (NKWD). The KH-like domain occupies 379–463 (RRITTARLNT…PIRLTMRGQG (85 aa)). Residues 451–487 (PGTPIRLTMRGQGDKNPFKERKFRTPSRLRKHLGKKD) are disordered. Positions 471-487 (RKFRTPSRLRKHLGKKD) are enriched in basic residues.

It belongs to the TRAFAC class TrmE-Era-EngA-EngB-Septin-like GTPase superfamily. EngA (Der) GTPase family. Associates with the 50S ribosomal subunit.

In terms of biological role, GTPase that plays an essential role in the late steps of ribosome biogenesis. This Cereibacter sphaeroides (strain ATCC 17029 / ATH 2.4.9) (Rhodobacter sphaeroides) protein is GTPase Der.